The following is a 70-amino-acid chain: Brevinin-1MT2 (70 aa).

The signal sequence occupies residues 1-22 (MFTLKKSMLLLFFLGTINLSLC). A propeptide spanning residues 23–44 (EQERNADEEERRDDDEMDVEVE) is cleaved from the precursor. Cysteines 64 and 70 form a disulfide.

Belongs to the frog skin active peptide (FSAP) family. Brevinin subfamily. Expressed by the skin glands.

It localises to the secreted. Antimicrobial peptide with activity against a variety of Gram-negative and Gram-positive bacteria and against fungi. Shows strong hemolytic activity against human erythrocytes. The sequence is that of Brevinin-1MT2 from Amolops mantzorum (Sichuan torrent frog).